A 294-amino-acid chain; its full sequence is Acetylglutamate kinase (294 aa).

Substrate-binding positions include 66–67 (GG), arginine 88, and asparagine 193.

Belongs to the acetylglutamate kinase family. ArgB subfamily.

The protein resides in the cytoplasm. The catalysed reaction is N-acetyl-L-glutamate + ATP = N-acetyl-L-glutamyl 5-phosphate + ADP. It functions in the pathway amino-acid biosynthesis; L-arginine biosynthesis; N(2)-acetyl-L-ornithine from L-glutamate: step 2/4. Catalyzes the ATP-dependent phosphorylation of N-acetyl-L-glutamate. This Agrobacterium fabrum (strain C58 / ATCC 33970) (Agrobacterium tumefaciens (strain C58)) protein is Acetylglutamate kinase.